A 943-amino-acid chain; its full sequence is Isoleucine--tRNA ligase (943 aa).

The short motif at 58-68 (PYANGSIHIGH) is the 'HIGH' region element. Glu567 lines the L-isoleucyl-5'-AMP pocket. A 'KMSKS' region motif is present at residues 608–612 (KMSKS). Lys611 is an ATP binding site. Positions 906, 909, 926, and 929 each coordinate Zn(2+).

The protein belongs to the class-I aminoacyl-tRNA synthetase family. IleS type 1 subfamily. In terms of assembly, monomer. The cofactor is Zn(2+).

The protein localises to the cytoplasm. It carries out the reaction tRNA(Ile) + L-isoleucine + ATP = L-isoleucyl-tRNA(Ile) + AMP + diphosphate. Functionally, catalyzes the attachment of isoleucine to tRNA(Ile). As IleRS can inadvertently accommodate and process structurally similar amino acids such as valine, to avoid such errors it has two additional distinct tRNA(Ile)-dependent editing activities. One activity is designated as 'pretransfer' editing and involves the hydrolysis of activated Val-AMP. The other activity is designated 'posttransfer' editing and involves deacylation of mischarged Val-tRNA(Ile). The polypeptide is Isoleucine--tRNA ligase (Pseudomonas paraeruginosa (strain DSM 24068 / PA7) (Pseudomonas aeruginosa (strain PA7))).